The following is a 544-amino-acid chain: Probable protein kinase UbiB (544 aa).

Residues 123-505 form the Protein kinase domain; it reads EFDEQALASA…GRQKSHNVRS (383 aa). ATP-binding positions include 129–137 and lysine 156; that span reads LASASIAQV. Aspartate 291 acts as the Proton acceptor in catalysis. A helical membrane pass occupies residues 522-540; it reads LPLWLSCGTLVTVLLVLLL.

It belongs to the ABC1 family. UbiB subfamily.

It localises to the cell inner membrane. It participates in cofactor biosynthesis; ubiquinone biosynthesis [regulation]. Its function is as follows. Is probably a protein kinase regulator of UbiI activity which is involved in aerobic coenzyme Q (ubiquinone) biosynthesis. This Actinobacillus pleuropneumoniae serotype 7 (strain AP76) protein is Probable protein kinase UbiB.